Here is a 421-residue protein sequence, read N- to C-terminus: 3-isopropylmalate dehydratase large subunit (421 aa).

[4Fe-4S] cluster contacts are provided by Cys-300, Cys-360, and Cys-363.

It belongs to the aconitase/IPM isomerase family. LeuC type 2 subfamily. As to quaternary structure, heterodimer of LeuC and LeuD. Requires [4Fe-4S] cluster as cofactor.

The catalysed reaction is (2R,3S)-3-isopropylmalate = (2S)-2-isopropylmalate. Its pathway is amino-acid biosynthesis; L-leucine biosynthesis; L-leucine from 3-methyl-2-oxobutanoate: step 2/4. Its function is as follows. Catalyzes the isomerization between 2-isopropylmalate and 3-isopropylmalate, via the formation of 2-isopropylmaleate. This Thermodesulfovibrio yellowstonii (strain ATCC 51303 / DSM 11347 / YP87) protein is 3-isopropylmalate dehydratase large subunit.